Consider the following 1451-residue polypeptide: ARF guanine-nucleotide exchange factor GNOM (1451 aa).

The interval 1–246 is DCB domain; the sequence is MGRLKLHSGI…VNRAGSIKQE (246 aa). The region spanning 557 to 752 is the SEC7 domain; the sequence is RRKYIKRRLM…NEIRTTPEQG (196 aa). The active site involves glutamate 658. Residues 1430–1451 are disordered; sequence SQLGDDETVSNGLSSPENTTGS.

In terms of assembly, homodimer. Interacts with CYP19-4/CYP5 in vitro. As to expression, stems, leaves, flowers, siliques, floral inflorescence and roots. Expressed in the whole plant (at the protein level).

The protein localises to the cytoplasm. The protein resides in the cytosol. It is found in the endosome membrane. It localises to the cell membrane. With respect to regulation, inhibited by brefeldin A (BFA). Its function is as follows. Activates the ARF proteins by exchanging bound GDP for free GTP. Plays a role in vesicular protein sorting. Acts as the major regulator of endosomal vesicle trafficking but is also involved in the endocytosis process. Could function redundantly with GNL1 in the retrograde Golgi to endoplasmic reticulum trafficking. Regulates vesicle trafficking required for the coordinated polar localization of auxin efflux carriers which in turn determines the direction of auxin flow. Mediates the sorting of PIN1 from endosomal compartments to the basal plasma membrane and the polarization of PIN3 to the bottom side of hypocotyl endodermal cells. Involved in the specification of apical-basal pattern formation in the early embryo and during root formation. Required for correct cell wall organization leading to normal cell adhesion during seedling development. Also plays an essential role in hydrotropism of seedling roots. This chain is ARF guanine-nucleotide exchange factor GNOM (GN), found in Arabidopsis thaliana (Mouse-ear cress).